A 330-amino-acid chain; its full sequence is Aspartate--ammonia ligase (330 aa).

Belongs to the class-II aminoacyl-tRNA synthetase family. AsnA subfamily.

It is found in the cytoplasm. It carries out the reaction L-aspartate + NH4(+) + ATP = L-asparagine + AMP + diphosphate + H(+). Its pathway is amino-acid biosynthesis; L-asparagine biosynthesis; L-asparagine from L-aspartate (ammonia route): step 1/1. This chain is Aspartate--ammonia ligase, found in Histophilus somni (strain 2336) (Haemophilus somnus).